The primary structure comprises 257 residues: 3-oxo-5-alpha-steroid 4-dehydrogenase 1 (257 aa).

Helical transmembrane passes span 7 to 27 (FLLD…YVLL), 50 to 70 (AAWT…CAGA), 84 to 104 (ILLA…PFLI), 109 to 129 (PMPL…GYLQ), 149 to 169 (FLTG…SDHV), and 208 to 228 (ALAS…CVLF).

The protein belongs to the steroid 5-alpha reductase family.

The protein resides in the microsome membrane. It localises to the endoplasmic reticulum membrane. The catalysed reaction is a 3-oxo-5alpha-steroid + NADP(+) = a 3-oxo-Delta(4)-steroid + NADPH + H(+). It carries out the reaction 5alpha-pregnane-3,20-dione + NADP(+) = progesterone + NADPH + H(+). It catalyses the reaction 17beta-hydroxy-5alpha-androstan-3-one + NADP(+) = testosterone + NADPH + H(+). The enzyme catalyses androst-4-ene-3,17-dione + NADPH + H(+) = 5alpha-androstan-3,17-dione + NADP(+). Functionally, converts testosterone into 5-alpha-dihydrotestosterone and progesterone or corticosterone into their corresponding 5-alpha-3-oxosteroids. It plays a central role in sexual differentiation and androgen physiology. This chain is 3-oxo-5-alpha-steroid 4-dehydrogenase 1 (SRD5A1), found in Bos taurus (Bovine).